The following is a 620-amino-acid chain: Chaperone protein HscA homolog (620 aa).

The protein belongs to the heat shock protein 70 family.

Its function is as follows. Chaperone involved in the maturation of iron-sulfur cluster-containing proteins. Has a low intrinsic ATPase activity which is markedly stimulated by HscB. The chain is Chaperone protein HscA homolog from Janthinobacterium sp. (strain Marseille) (Minibacterium massiliensis).